The following is a 473-amino-acid chain: Isocitrate dehydrogenase [NADP] (473 aa).

Position 104 (threonine 104) interacts with NADP(+). Residues serine 113, asparagine 115, arginine 119, arginine 129, and arginine 153 each contribute to the D-threo-isocitrate site. Aspartate 362 lines the Mg(2+) pocket. NADP(+) is bound by residues histidine 394–histidine 400, asparagine 407, tyrosine 446, and arginine 450.

This sequence belongs to the isocitrate and isopropylmalate dehydrogenases family. In terms of assembly, homodimer. The cofactor is Mg(2+). Mn(2+) serves as cofactor.

It carries out the reaction D-threo-isocitrate + NADP(+) = 2-oxoglutarate + CO2 + NADPH. With respect to regulation, inhibited by either oxaloacetate or glyoxylate. Also inhibited by the adenine nucleotides AMP, ADP and ATP and by NADPH, which inhibits the activity by 28% when it is added to the assay mixture at 0.25 mM. Its function is as follows. Catalyzes the oxidative decarboxylation of isocitrate to 2-oxoglutarate and carbon dioxide with the concomitant reduction of NADP(+). This Nostoc sp. (strain PCC 7120 / SAG 25.82 / UTEX 2576) protein is Isocitrate dehydrogenase [NADP].